Here is a 403-residue protein sequence, read N- to C-terminus: Solanesyl-diphosphate synthase 2, chloroplastic (403 aa).

Residues 1–62 constitute a chloroplast transit peptide; that stretch reads MLSVSCPRVY…QPGLAAVDVP (62 aa). The isopentenyl diphosphate site is built by lysine 123, arginine 126, and histidine 161. The Mg(2+) site is built by aspartate 168 and aspartate 172. Arginine 177 contributes to the an all-trans-polyprenyl diphosphate binding site. Arginine 178 lines the isopentenyl diphosphate pocket. Positions 254, 255, 292, and 309 each coordinate an all-trans-polyprenyl diphosphate.

The protein belongs to the FPP/GGPP synthase family. In terms of assembly, homodimer. Interacts with FBN5. Mg(2+) serves as cofactor. As to expression, expressed in leaves, stems and roots. Highest expression in leaves and roots.

The protein resides in the plastid. Its subcellular location is the chloroplast. The catalysed reaction is 7 isopentenyl diphosphate + (2E)-geranyl diphosphate = all-trans-nonaprenyl diphosphate + 7 diphosphate. Its function is as follows. Involved in providing solanesyl diphosphate for plastoquinone-9 (PQ-9) formation. Geranyl diphosphate is the preferred substrate. The protein is Solanesyl-diphosphate synthase 2, chloroplastic of Oryza sativa subsp. japonica (Rice).